Consider the following 461-residue polypeptide: Cysteine--tRNA ligase (461 aa).

C30 lines the Zn(2+) pocket. Residues 32–42 (VTVYDLCHIGH) carry the 'HIGH' region motif. Zn(2+) is bound by residues C211, H236, and E240. Residues 268-272 (KMSKS) carry the 'KMSKS' region motif. K271 provides a ligand contact to ATP.

Belongs to the class-I aminoacyl-tRNA synthetase family. Monomer. Requires Zn(2+) as cofactor.

The protein resides in the cytoplasm. The enzyme catalyses tRNA(Cys) + L-cysteine + ATP = L-cysteinyl-tRNA(Cys) + AMP + diphosphate. The sequence is that of Cysteine--tRNA ligase from Shewanella sp. (strain MR-4).